The sequence spans 160 residues: Heat shock protein beta-6 (160 aa).

An involved in stabilization of the HSPB1:HSBP6 heterodimer region spans residues 1-72; that stretch reads MEIPVPVQPS…PVAQVPTDPG (72 aa). Phosphoserine; by PKA is present on serine 16. The region spanning 55-160 is the sHSP domain; that stretch reads LRAPSVALPV…AQAPPPAAAK (106 aa). Glutamine 66 is subject to Deamidated glutamine.

This sequence belongs to the small heat shock protein (HSP20) family. As to quaternary structure, homodimer. Small heat shock proteins form high molecular mass oligomers containing variable number of monomers; these oligomers display a very flexible quaternary structure easily exchanging their subunits. Heterooligomer with HSPB1; formed through oligomerization of HSPB1:HSBP6 dimers; subunit exchange leads to formation of at least two different heterooligomeric complexes, differing in variable quantities of HSPB1 and HSPB6 homodimers in addition to HSPB1:HSPB6 heterodimers. Heterooligomer with CRYAB; large heterooligomers consist of CRYAB homodimers and HSPB5:HSPB6 heterodimers but lacking HSPB6 homodimers. Interacts with BAG3. Interacts (phosphorylated) with YWHAZ. Interacts with PDE4A and PDE4D; required for maintenance of the non-phosphorylated state of HSPB6 under basal conditions. Interacts with KDR. Interacts with PRKD1. The N-terminus is blocked. In terms of processing, phosphorylated at Ser-16 by PKA and probably PKD1K; required to protect cardiomyocytes from apoptosis.

It is found in the cytoplasm. The protein resides in the nucleus. Its subcellular location is the secreted. Its function is as follows. Small heat shock protein which functions as a molecular chaperone probably maintaining denatured proteins in a folding-competent state. Seems to have versatile functions in various biological processes. Plays a role in regulating muscle function such as smooth muscle vasorelaxation and cardiac myocyte contractility. May regulate myocardial angiogenesis implicating KDR. Overexpression mediates cardioprotection and angiogenesis after induced damage. Stabilizes monomeric YWHAZ thereby supporting YWHAZ chaperone-like activity. The sequence is that of Heat shock protein beta-6 (HSPB6) from Homo sapiens (Human).